Here is a 447-residue protein sequence, read N- to C-terminus: Argininosuccinate synthase (447 aa).

Residues 12 to 20 and Ala39 each bind ATP; that span reads AYSGGLDTS. L-citrulline-binding residues include Tyr92 and Ser97. Residue Gly122 coordinates ATP. Thr124, Asn128, and Asp129 together coordinate L-aspartate. Residue Asn128 participates in L-citrulline binding. L-citrulline-binding residues include Arg132, Ser182, Ser191, Glu267, and Tyr279.

The protein belongs to the argininosuccinate synthase family. Type 1 subfamily. As to quaternary structure, homotetramer.

The protein localises to the cytoplasm. It catalyses the reaction L-citrulline + L-aspartate + ATP = 2-(N(omega)-L-arginino)succinate + AMP + diphosphate + H(+). The protein operates within amino-acid biosynthesis; L-arginine biosynthesis; L-arginine from L-ornithine and carbamoyl phosphate: step 2/3. The chain is Argininosuccinate synthase from Sulfurovum sp. (strain NBC37-1).